The chain runs to 354 residues: UPF0283 protein YcjF (354 aa).

Helical transmembrane passes span 71–91 (MVTVGIALFGVSVIAQSVQWV), 101–121 (IALGATTAGGLIVLAGVGSVV), and 214–234 (ESALMIAVSPLALVDMAFIAW).

It belongs to the UPF0283 family.

The protein localises to the cell inner membrane. The chain is UPF0283 protein YcjF (ycjF) from Yersinia enterocolitica.